A 333-amino-acid polypeptide reads, in one-letter code: Cell division protein ZipA (333 aa).

The Periplasmic portion of the chain corresponds to 1–5 (MQELR). Residues 6–26 (LVLILVGALAIAALLFHGLWT) form a helical membrane-spanning segment. The Cytoplasmic segment spans residues 27 to 333 (SRKETSSKFG…KQRVKVFCRK (307 aa)). Residues 72–81 (KEPAFAREEV) show a composition bias toward basic and acidic residues. The segment at 72 to 119 (KEPAFAREEVPTSDDPLFEGTVSSESNKFTQQEKPTVQQAQPQPQPQP) is disordered. The segment covering 92 to 107 (TVSSESNKFTQQEKPT) has biased composition (polar residues). Low complexity predominate over residues 108–119 (VQQAQPQPQPQP).

The protein belongs to the ZipA family. Interacts with FtsZ via their C-terminal domains.

The protein resides in the cell inner membrane. Its function is as follows. Essential cell division protein that stabilizes the FtsZ protofilaments by cross-linking them and that serves as a cytoplasmic membrane anchor for the Z ring. Also required for the recruitment to the septal ring of downstream cell division proteins. The polypeptide is Cell division protein ZipA (Aliivibrio fischeri (strain ATCC 700601 / ES114) (Vibrio fischeri)).